Reading from the N-terminus, the 89-residue chain is uncharacterized protein (89 aa).

The chain crosses the membrane as a helical span at residues 67–86 (VYLSSMYICFILLAIWMTVW).

The protein resides in the membrane. This is an uncharacterized protein from Bacillus subtilis (strain 168).